The chain runs to 356 residues: 3-isopropylmalate dehydrogenase (356 aa).

Residue 73–86 coordinates NAD(+); it reads GTQYDGLPREKRPE. Substrate is bound by residues R93, R103, R131, and D220. Mg(2+)-binding residues include D220, D244, and D248. 278–290 is an NAD(+) binding site; it reads GSAPDIAGKGIAN.

Belongs to the isocitrate and isopropylmalate dehydrogenases family. LeuB type 1 subfamily. As to quaternary structure, homodimer. The cofactor is Mg(2+). Requires Mn(2+) as cofactor.

The protein resides in the cytoplasm. The catalysed reaction is (2R,3S)-3-isopropylmalate + NAD(+) = 4-methyl-2-oxopentanoate + CO2 + NADH. It participates in amino-acid biosynthesis; L-leucine biosynthesis; L-leucine from 3-methyl-2-oxobutanoate: step 3/4. In terms of biological role, catalyzes the oxidation of 3-carboxy-2-hydroxy-4-methylpentanoate (3-isopropylmalate) to 3-carboxy-4-methyl-2-oxopentanoate. The product decarboxylates to 4-methyl-2 oxopentanoate. The chain is 3-isopropylmalate dehydrogenase from Nitrosomonas europaea (strain ATCC 19718 / CIP 103999 / KCTC 2705 / NBRC 14298).